The chain runs to 383 residues: Alanine racemase (383 aa).

K50 serves as the catalytic Proton acceptor; specific for D-alanine. At K50 the chain carries N6-(pyridoxal phosphate)lysine. R151 lines the substrate pocket. Residue Y279 is the Proton acceptor; specific for L-alanine of the active site. Position 327 (M327) interacts with substrate.

Belongs to the alanine racemase family. Pyridoxal 5'-phosphate serves as cofactor.

It carries out the reaction L-alanine = D-alanine. The protein operates within amino-acid biosynthesis; D-alanine biosynthesis; D-alanine from L-alanine: step 1/1. Functionally, catalyzes the interconversion of L-alanine and D-alanine. May also act on other amino acids. This chain is Alanine racemase (alr), found in Chlorobaculum tepidum (strain ATCC 49652 / DSM 12025 / NBRC 103806 / TLS) (Chlorobium tepidum).